Consider the following 770-residue polypeptide: Serine/threonine-protein kinase PLK4 (770 aa).

The Protein kinase domain maps to 14 to 267; sequence YEVQHLLGKG…LEHVLRHPFL (254 aa). ATP contacts are provided by residues 20–28 and K43; that span reads LGKGGFASV. Catalysis depends on D138, which acts as the Proton acceptor. The Cryptic POLO box 1 (CPB1) domain maps to 383–500; it reads EERISVPPLN…DRFVGLVKSK (118 aa). The Cryptic POLO box 2 (CPB2) domain occupies 501-604; the sequence is TPKVTYFSAL…GRRPVTEVQP (104 aa). Residues 662 to 741 form the POLO box domain; that stretch reads PIKRINLPDI…LPHIQLKLKT (80 aa).

This sequence belongs to the protein kinase superfamily. Ser/Thr protein kinase family. CDC5/Polo subfamily. Homodimer. In terms of processing, ubiquitinated by the SCF(Slimb) ubiquitin ligase complex; leading to its degradation by the proteasome during interphase and regulating centriole number and ensuring the block to centriole reduplication.

Its subcellular location is the cytoplasm. The protein localises to the cytoskeleton. The protein resides in the microtubule organizing center. It localises to the centrosome. It is found in the centriole. The enzyme catalyses L-seryl-[protein] + ATP = O-phospho-L-seryl-[protein] + ADP + H(+). It catalyses the reaction L-threonyl-[protein] + ATP = O-phospho-L-threonyl-[protein] + ADP + H(+). Its function is as follows. Serine/threonine-protein kinase that plays a central role in centriole duplication. Able to trigger procentriole formation on the surface of the mother centriole cylinder, using mother centriole as a platform, leading to the recruitment of centriole biogenesis proteins such as sas-6. When overexpressed, it is able to induce centrosome amplification through the simultaneous generation of multiple procentrioles adjoining each parental centriole during S phase. Centrosome amplification following overexpression can initiate tumorigenesis, highlighting the importance of centrosome regulation in cancers. This Drosophila ananassae (Fruit fly) protein is Serine/threonine-protein kinase PLK4 (SAK).